A 325-amino-acid polypeptide reads, in one-letter code: Aldo-keto reductase family 1 member A1 (325 aa).

A2 is modified (N-acetylalanine). S4 carries the phosphoserine modification. NADP(+)-binding positions include 11-20, T21, and W22; that span reads GQKMPLIGLG. S38 bears the Phosphoserine mark. D45 contributes to the NADP(+) binding site. Residue Y50 is the Proton donor of the active site. K127 carries the N6-acetyllysine; alternate modification. Position 127 is an N6-succinyllysine; alternate (K127). K145 is subject to N6-succinyllysine. 13 residues coordinate NADP(+): S162, N163, S211, L213, S215, S216, K263, S264, I265, T266, R269, Q272, and N273. At S211 the chain carries Phosphoserine.

This sequence belongs to the aldo/keto reductase family.

The protein localises to the cytoplasm. It is found in the cytosol. It localises to the apical cell membrane. The enzyme catalyses a primary alcohol + NADP(+) = an aldehyde + NADPH + H(+). The catalysed reaction is L-gulonate + NADP(+) = aldehydo-D-glucuronate + NADPH + H(+). It catalyses the reaction L-gulono-1,4-lactone + NADP(+) = D-glucurono-3,6-lactone + NADPH + H(+). It carries out the reaction allyl alcohol + NADP(+) = acrolein + NADPH + H(+). The enzyme catalyses glycerol + NADP(+) = D-glyceraldehyde + NADPH + H(+). The catalysed reaction is glycerol + NADP(+) = L-glyceraldehyde + NADPH + H(+). It catalyses the reaction hydroxyacetone + NADP(+) = methylglyoxal + NADPH + H(+). It carries out the reaction 3-deoxyfructose + NADP(+) = 3-deoxyglucosone + NADPH + H(+). The enzyme catalyses (R)-mevalonate + NADP(+) = (R)-mevaldate + NADPH + H(+). The catalysed reaction is pyridine 3-methanol + NADP(+) = pyridine-3-carbaldehyde + NADPH + H(+). It catalyses the reaction S-nitroso-CoA + NADPH + H(+) = sulfinamide-CoA + NADP(+). It carries out the reaction S-nitrosoglutathione + NADPH + H(+) = S-(hydroxysulfenamide)glutathione + NADP(+). Its function is as follows. Catalyzes the NADPH-dependent reduction of a wide variety of carbonyl-containing compounds to their corresponding alcohols. Displays enzymatic activity towards endogenous metabolites such as aromatic and aliphatic aldehydes, ketones, monosaccharides and bile acids, with a preference for negatively charged substrates, such as glucuronate and succinic semialdehyde. Functions as a detoxifiying enzyme by reducing a range of toxic aldehydes. Reduces methylglyoxal and 3-deoxyglucosone, which are present at elevated levels under hyperglycemic conditions and are cytotoxic. Involved also in the detoxification of lipid-derived aldehydes like acrolein. Plays a role in the activation of procarcinogens, such as polycyclic aromatic hydrocarbon trans-dihydrodiols, and in the metabolism of various xenobiotics and drugs. Also acts as an inhibitor of protein S-nitrosylation by mediating degradation of S-nitroso-coenzyme A (S-nitroso-CoA), a cofactor required to S-nitrosylate proteins. S-nitroso-CoA reductase activity is involved in reprogramming intermediary metabolism in renal proximal tubules, notably by inhibiting protein S-nitrosylation of isoform 2 of PKM (PKM2). Also acts as a S-nitroso-glutathione reductase by catalyzing the NADPH-dependent reduction of S-nitrosoglutathione. Displays no reductase activity towards retinoids. This is Aldo-keto reductase family 1 member A1 (AKR1A1) from Pongo abelii (Sumatran orangutan).